Here is a 159-residue protein sequence, read N- to C-terminus: Cytochrome c-type biogenesis protein CcmE (159 aa).

Residues 1–23 (MSSQSFHNSPSLRVILKQRKKKR) are Cytoplasmic-facing. The chain crosses the membrane as a helical; Signal-anchor for type II membrane protein span at residues 24–44 (LLIVLFCCLIIAIATSLITYA). Residues 45–159 (LRNTVSFFRM…RLNKHHRVEK (115 aa)) are Periplasmic-facing. 2 residues coordinate heme: H138 and Y142.

It belongs to the CcmE/CycJ family.

It localises to the cell inner membrane. In terms of biological role, heme chaperone required for the biogenesis of c-type cytochromes. Transiently binds heme delivered by CcmC and transfers the heme to apo-cytochromes in a process facilitated by CcmF and CcmH. This chain is Cytochrome c-type biogenesis protein CcmE, found in Bartonella henselae (strain ATCC 49882 / DSM 28221 / CCUG 30454 / Houston 1) (Rochalimaea henselae).